We begin with the raw amino-acid sequence, 339 residues long: Phenylalanine--tRNA ligase alpha subunit (339 aa).

Glu-254 is a binding site for Mg(2+).

It belongs to the class-II aminoacyl-tRNA synthetase family. Phe-tRNA synthetase alpha subunit type 1 subfamily. Tetramer of two alpha and two beta subunits. Requires Mg(2+) as cofactor.

It localises to the cytoplasm. It carries out the reaction tRNA(Phe) + L-phenylalanine + ATP = L-phenylalanyl-tRNA(Phe) + AMP + diphosphate + H(+). In Alkaliphilus oremlandii (strain OhILAs) (Clostridium oremlandii (strain OhILAs)), this protein is Phenylalanine--tRNA ligase alpha subunit.